Reading from the N-terminus, the 391-residue chain is MDQFIKQDETGDLIETGMNVANHFLSAPIQGTNSLSKASIIPGVAPVLIGNPEQKNIQHPTASHQGSKSKGSGSGVRSIIVPPSEAGNGGTQDPEPLFAQTGQGGIVTTVYQDPTIQPTGSSRSVELAKIGKERMINRFVEKPRISTPVTEFKRGGPGAAAQGQTIQEEGIDGNGASAGSKERSGSLSGATLYAHLSLPQQDSTPANVGIAPQSAISANEIMDLLRGMDARLQHLEQKVDKVLAQGSMVTQIKNELSTVKTTLATIEGMMATVKIMDPGNPTGVPVDELRRSFSDHVTIVSGPGDVPFSSSEEPTLYLDELARPVSKPRPAKQTKPQPVKDLAGRKVMITKMITDCVANPQMKQAFEQRLAKASTEDALNDIKRDIIRSAI.

2 positions are modified to phosphothreonine: T10 and T16. The span at 54–65 (QKNIQHPTASHQ) shows a compositional bias: polar residues. Disordered stretches follow at residues 54–97 (QKNI…PEPL) and 148–185 (PVTE…ERSG). S69 carries the post-translational modification Phosphoserine. T91, T150, and T165 each carry phosphothreonine. S188 carries the phosphoserine modification. The interval 216-279 (ISANEIMDLL…MATVKIMDPG (64 aa)) is multimerization. A coiled-coil region spans residues 218-245 (ANEIMDLLRGMDARLQHLEQKVDKVLAQ). T250 carries the post-translational modification Phosphothreonine. At S257 the chain carries Phosphoserine. 2 positions are modified to phosphothreonine: T258 and T282. 2 positions are modified to phosphoserine: S292 and S294. T298 carries the phosphothreonine modification. Phosphoserine occurs at positions 301 and 374. The tract at residues 343–391 (AGRKVMITKMITDCVANPQMKQAFEQRLAKASTEDALNDIKRDIIRSAI) is interaction with the nucleoprotein. Residue T375 is modified to Phosphothreonine.

It belongs to the rubulavirus/avulavirus P protein family. Homotetramer. Interacts (via multimerization domain) with polymerase L; this interaction forms the polymerase L-P complex. Interacts (via N-terminus) with N0 (via Ncore); this interaction allows P to chaperon N0 to avoid N polymerization before encapsidation. Interacts (via C-terminus) with N-RNA template; this interaction positions the polymerase on the template for both transcription and replication. Interacts with host RPS6KB1 kinase; this interaction may play a role in the viral replication and transcription.

Functionally, essential cofactor of the RNA polymerase L that plays a central role in the transcription and replication by forming the polymerase complex with RNA polymerase L and recruiting L to the genomic N-RNA template for RNA synthesis. Also plays a central role in the encapsidation of nascent RNA chains by forming the encapsidation complex with the nucleocapsid protein N (N-P complex). Acts as a chaperone for newly synthesized free N protein, so-called N0, allowing encapsidation of nascent RNA chains during replication. The nucleoprotein protein N prevents excessive phosphorylation of P, which leads to down-regulation of viral transcription/ replication. Participates, together with N, in the formation of viral factories (viroplasms), which are large inclusions in the host cytoplasm where replication takes place. The protein is Phosphoprotein (P/V) of Homo sapiens (Human).